Here is a 184-residue protein sequence, read N- to C-terminus: Small ribosomal subunit protein uS4c (184 aa).

The region spanning 82-143 is the S4 RNA-binding domain; that stretch reads MRLDNILFRL…KQRSKALIQN (62 aa).

Belongs to the universal ribosomal protein uS4 family. Part of the 30S ribosomal subunit. Contacts protein S5. The interaction surface between S4 and S5 is involved in control of translational fidelity.

The protein localises to the plastid. Its subcellular location is the chloroplast. One of the primary rRNA binding proteins, it binds directly to 16S rRNA where it nucleates assembly of the body of the 30S subunit. Functionally, with S5 and S12 plays an important role in translational accuracy. The sequence is that of Small ribosomal subunit protein uS4c (rps4) from Patersonia fragilis (Short purple-flag).